The sequence spans 81 residues: Acyl carrier protein (81 aa).

One can recognise a Carrier domain in the interval 3–78 (QEIFDKIKNI…EAVNIIAEKT (76 aa)). Position 38 is an O-(pantetheine 4'-phosphoryl)serine (Ser38).

The protein belongs to the acyl carrier protein (ACP) family. Post-translationally, 4'-phosphopantetheine is transferred from CoA to a specific serine of apo-ACP by AcpS. This modification is essential for activity because fatty acids are bound in thioester linkage to the sulfhydryl of the prosthetic group.

It is found in the cytoplasm. It participates in lipid metabolism; fatty acid biosynthesis. In terms of biological role, carrier of the growing fatty acid chain in fatty acid biosynthesis. The sequence is that of Acyl carrier protein from Picosynechococcus sp. (strain ATCC 27264 / PCC 7002 / PR-6) (Agmenellum quadruplicatum).